The primary structure comprises 117 residues: Regulator of ribonuclease activity B (117 aa).

The protein belongs to the RraB family. In terms of assembly, interacts with the C-terminal region of Rne.

Its subcellular location is the cytoplasm. Functionally, globally modulates RNA abundance by binding to RNase E (Rne) and regulating its endonucleolytic activity. Can modulate Rne action in a substrate-dependent manner by altering the composition of the degradosome. The sequence is that of Regulator of ribonuclease activity B from Pseudoalteromonas atlantica (strain T6c / ATCC BAA-1087).